We begin with the raw amino-acid sequence, 202 residues long: Putative 3-methyladenine DNA glycosylase (202 aa).

The protein belongs to the DNA glycosylase MPG family.

The polypeptide is Putative 3-methyladenine DNA glycosylase (Clostridioides difficile (strain 630) (Peptoclostridium difficile)).